The chain runs to 277 residues: Phosphate import ATP-binding protein PstB 1 (277 aa).

Residues 27 to 272 (LRVRDLAVSY…PSHELTAAYI (246 aa)) enclose the ABC transporter domain. 59-66 (GPSGCGKT) provides a ligand contact to ATP.

This sequence belongs to the ABC transporter superfamily. Phosphate importer (TC 3.A.1.7) family. In terms of assembly, the complex is composed of two ATP-binding proteins (PstB), two transmembrane proteins (PstC and PstA) and a solute-binding protein (PstS).

It localises to the cell inner membrane. The catalysed reaction is phosphate(out) + ATP + H2O = ADP + 2 phosphate(in) + H(+). Functionally, part of the ABC transporter complex PstSACB involved in phosphate import. Responsible for energy coupling to the transport system. The chain is Phosphate import ATP-binding protein PstB 1 from Nitrosococcus oceani (strain ATCC 19707 / BCRC 17464 / JCM 30415 / NCIMB 11848 / C-107).